The sequence spans 443 residues: MGHRGKRKPLPAEPIAAHIESFAHDGKGIAHVDGRVVFVDGALPGEDVTFVYTEIKRDYAAGRVVEIVTASPDRVPARCRHFALCGGCSLQYLSEDAQIALKEDLLLDQFRRIGKVEPAAQFPPLRGPHWGYRSRARLGARYVAKKGRELVGFREHASAKIVDMTDCPVLHPALGERIQAFAELIEGLSLRERLPQIEAAVGEERTALVFRVLEDPTAEDFARLARFGKDQGLDVYIQREGRDSVAPVYPETAHDLSYSLPEWEVTFRFGPLDFTQVNMAINRQMIDQVMQALDPQPEERVLDLFCGLGNFTLPLARRAGHVTGVEGGAEAVARAIRNAADNGIGNVEFHVADLSKPESCGSWAGREYHKVLLDPSRSGALEILQCVPNWKAGRIVYVSCNPSTLARDAGILVHEYGYRLLKAGVMDMFPHTAHVESIAVFER.

One can recognise a TRAM domain in the interval 8–66; sequence KPLPAEPIAAHIESFAHDGKGIAHVDGRVVFVDGALPGEDVTFVYTEIKRDYAAGRVVE. Residues C79, C85, C88, and C167 each contribute to the [4Fe-4S] cluster site. S-adenosyl-L-methionine contacts are provided by Q276, F305, N310, E326, D353, and D374. The active-site Nucleophile is C400.

It belongs to the class I-like SAM-binding methyltransferase superfamily. RNA M5U methyltransferase family. RlmD subfamily.

The enzyme catalyses uridine(1939) in 23S rRNA + S-adenosyl-L-methionine = 5-methyluridine(1939) in 23S rRNA + S-adenosyl-L-homocysteine + H(+). Catalyzes the formation of 5-methyl-uridine at position 1939 (m5U1939) in 23S rRNA. This chain is 23S rRNA (uracil(1939)-C(5))-methyltransferase RlmD, found in Methylococcus capsulatus (strain ATCC 33009 / NCIMB 11132 / Bath).